Consider the following 434-residue polypeptide: Histidine--tRNA ligase (434 aa).

The protein belongs to the class-II aminoacyl-tRNA synthetase family. Homodimer.

Its subcellular location is the cytoplasm. It carries out the reaction tRNA(His) + L-histidine + ATP = L-histidyl-tRNA(His) + AMP + diphosphate + H(+). This Latilactobacillus sakei subsp. sakei (strain 23K) (Lactobacillus sakei subsp. sakei) protein is Histidine--tRNA ligase.